The following is a 65-amino-acid chain: Large ribosomal subunit protein bL33c (65 aa).

This sequence belongs to the bacterial ribosomal protein bL33 family.

It is found in the plastid. This chain is Large ribosomal subunit protein bL33c, found in Aneura mirabilis (Parasitic liverwort).